We begin with the raw amino-acid sequence, 379 residues long: Reducing end xylose-releasing exo-oligoxylanase (379 aa).

Glu66 acts as the Proton donor in catalysis. The active-site Proton acceptor is the Asp259.

It belongs to the glycosyl hydrolase 8 (cellulase D) family.

The enzyme catalyses Hydrolysis of (1-&gt;4)-beta-D-xylose residues from the reducing end of oligosaccharides.. Functionally, hydrolyzes xylooligosaccharides with a degree of polymerization of greater than or equal to 3, releasing xylose from the reducing end. Has low activity on birchwood xylan, oat spelt xylan and arabinoxylan. This is Reducing end xylose-releasing exo-oligoxylanase from Bifidobacterium adolescentis (strain ATCC 15703 / DSM 20083 / NCTC 11814 / E194a).